Consider the following 228-residue polypeptide: uncharacterized protein (228 aa).

2 disordered regions span residues 1–62 and 160–228; these read MQRP…VGRF and SPRP…LSGV. The span at 13–33 shows a compositional bias: low complexity; that stretch reads AASTRAPPRPSAPQQGRRQPS. Residues 167–176 show a composition bias toward polar residues; it reads RGQQVTQDGP.

This is an uncharacterized protein from Homo sapiens (Human).